Reading from the N-terminus, the 376-residue chain is uncharacterized protein (376 aa).

It belongs to the glycosyltransferase 28 family.

This is an uncharacterized protein from Methanosarcina mazei (strain ATCC BAA-159 / DSM 3647 / Goe1 / Go1 / JCM 11833 / OCM 88) (Methanosarcina frisia).